A 101-amino-acid polypeptide reads, in one-letter code: Movement protein (101 aa).

The helical transmembrane segment at 30-50 (EVAVLSFVALICIYLLYLWVL) threads the bilayer. The tract at residues 78–101 (RSPIPNTLEPTAPVHPGPFVPGSG) is disordered. The segment covering 90–101 (PVHPGPFVPGSG) has biased composition (pro residues).

This sequence belongs to the mastrevirus movement protein family. Interacts with the capsid protein (CP). Part of a MP-CP-viral DNA complex.

Its subcellular location is the host membrane. Involved in the viral transport within, and between cells. The chain is Movement protein from Maize streak virus genotype E (isolate Pat) (MSV).